The primary structure comprises 226 residues: Enolase-phosphatase E1 (226 aa).

It belongs to the HAD-like hydrolase superfamily. MasA/MtnC family. As to quaternary structure, monomer. Requires Mg(2+) as cofactor.

The catalysed reaction is 5-methylsulfanyl-2,3-dioxopentyl phosphate + H2O = 1,2-dihydroxy-5-(methylsulfanyl)pent-1-en-3-one + phosphate. It participates in amino-acid biosynthesis; L-methionine biosynthesis via salvage pathway; L-methionine from S-methyl-5-thio-alpha-D-ribose 1-phosphate: step 3/6. The protein operates within amino-acid biosynthesis; L-methionine biosynthesis via salvage pathway; L-methionine from S-methyl-5-thio-alpha-D-ribose 1-phosphate: step 4/6. In terms of biological role, bifunctional enzyme that catalyzes the enolization of 2,3-diketo-5-methylthiopentyl-1-phosphate (DK-MTP-1-P) into the intermediate 2-hydroxy-3-keto-5-methylthiopentenyl-1-phosphate (HK-MTPenyl-1-P), which is then dephosphorylated to form the acireductone 1,2-dihydroxy-3-keto-5-methylthiopentene (DHK-MTPene). This chain is Enolase-phosphatase E1, found in Shewanella frigidimarina (strain NCIMB 400).